Reading from the N-terminus, the 342-residue chain is MKVLGIETSCDETGVAIFDTAAGLLGHCVHTQIALHAAYGGVVPELASRDHIRRLPLLVKQTLDAAGCELSQLDAIAYTAGPGLAGALLVGASFAESLGLALAVPVLPIHHLEGHLLSPLLAADPPAFPFVALLVSGGHTQLMRVTGVGEYALLGESVDDAAGEAFDKTAKLLGLGYPGGPQLAALAERGQTGRFRLPRPMLRSGDLDFSFSGLKTAVLNVVSAPTWRAEDVADLAADFQAAVVEVLCAKALRALEQTGLARLVVAGGVGANRHLRERLDASTRRKGCRVYYPEPELCTDNGAMIAFAGALRAAAGQRGGETPAVRVFPRWPLAELHSPVQP.

2 residues coordinate Fe cation: His111 and His115. Residues 134–138 (LVSGG), Asp167, Gly180, and Asn272 each bind substrate. Asp300 contributes to the Fe cation binding site.

Belongs to the KAE1 / TsaD family. Fe(2+) is required as a cofactor.

It localises to the cytoplasm. It carries out the reaction L-threonylcarbamoyladenylate + adenosine(37) in tRNA = N(6)-L-threonylcarbamoyladenosine(37) in tRNA + AMP + H(+). Its function is as follows. Required for the formation of a threonylcarbamoyl group on adenosine at position 37 (t(6)A37) in tRNAs that read codons beginning with adenine. Is involved in the transfer of the threonylcarbamoyl moiety of threonylcarbamoyl-AMP (TC-AMP) to the N6 group of A37, together with TsaE and TsaB. TsaD likely plays a direct catalytic role in this reaction. This Aromatoleum aromaticum (strain DSM 19018 / LMG 30748 / EbN1) (Azoarcus sp. (strain EbN1)) protein is tRNA N6-adenosine threonylcarbamoyltransferase.